The following is a 420-amino-acid chain: 3-oxoacyl-[acyl-carrier-protein] synthase 2 (420 aa).

In terms of domain architecture, Ketosynthase family 3 (KS3) spans 13 to 419; it reads FPNVVVTGIA…GHNVAIAFGC (407 aa). Active-site for beta-ketoacyl synthase activity residues include cysteine 173, histidine 314, and histidine 349.

It belongs to the thiolase-like superfamily. Beta-ketoacyl-ACP synthases family.

The protein resides in the cytoplasm. It carries out the reaction an ultra-long-chain di-unsaturated fatty acyl-[ACP] + malonyl-[ACP] + H(+) = a 3-oxo-ultra-long-chain di-unsaturated fatty acyl-[ACP] + holo-[ACP] + CO2. It participates in lipid metabolism; mycolic acid biosynthesis. In terms of biological role, part of the mycobacterial fatty acid elongation system FAS-II, which is involved in mycolic acid biosynthesis. Catalyzes the elongation of long chain acyl-ACP substrates by the addition of two carbons from malonyl-ACP to an acyl acceptor. Involved in extension of the mycolate chains to full lengths and produces longer chain multiunsaturated hydrocarbons averaging 54 carbons in length. The protein is 3-oxoacyl-[acyl-carrier-protein] synthase 2 (kasB) of Mycobacterium leprae (strain TN).